A 253-amino-acid chain; its full sequence is BRI3-binding protein (253 aa).

4 helical membrane-spanning segments follow: residues 19–39 (VLLP…PGAQ), 131–151 (ALVL…TLGF), 164–181 (FWLV…YILH), and 190–210 (AVLP…MGYW). Residues 219–253 (SPSVEEKLEHLENQVRLLNIRLNRVLENLDRSKDK) adopt a coiled-coil conformation. Phosphoserine is present on Ser250.

In terms of assembly, interacts with LETMD1. Interacts with BRI3. Interacts with BRI3; the interaction is weak. Interacts with TMEM238L.

Its subcellular location is the mitochondrion outer membrane. Functionally, involved in tumorigenesis and may function by stabilizing p53/TP53. The polypeptide is BRI3-binding protein (Mus musculus (Mouse)).